The primary structure comprises 223 residues: Germin-like protein 1-3 (223 aa).

Positions 1–22 (MAKLILATFAVVFMALAATSLA) are cleaved as a signal peptide. A disulfide bridge connects residues C32 and C50. N-linked (GlcNAc...) asparagine glycosylation occurs at N55. One can recognise a Cupin type-1 domain in the interval 64–212 (DGLMKAGNTG…AFQVDGGMVE (149 aa)). Mn(2+) is bound by residues H112, H114, E119, and H158.

The protein belongs to the germin family. Oligomer (believed to be a pentamer but probably hexamer).

Its subcellular location is the secreted. The protein localises to the extracellular space. It localises to the apoplast. May play a role in plant defense. Probably has no oxalate oxidase activity even if the active site is conserved. This is Germin-like protein 1-3 (GER8) from Oryza sativa subsp. japonica (Rice).